The sequence spans 418 residues: Putative methylthiotransferase jhp_0270 (418 aa).

The MTTase N-terminal domain maps to 2-110 (KKVYFKTFGC…INALLQEKKR (109 aa)). C11, C45, C74, C144, C148, and C151 together coordinate [4Fe-4S] cluster. Residues 130–355 (FVGKTRAFIK…KDLIFHKNKA (226 aa)) enclose the Radical SAM core domain.

The protein belongs to the methylthiotransferase family. The cofactor is [4Fe-4S] cluster.

This chain is Putative methylthiotransferase jhp_0270, found in Helicobacter pylori (strain J99 / ATCC 700824) (Campylobacter pylori J99).